Here is a 228-residue protein sequence, read N- to C-terminus: MSDFRKEFIEFAIGRNVLCFGEFQTKAGRISPYFFNAGLFNDGESLGKLGQFYAKAILAAQLPFDMLFGPAYKGIPLVSSIAIALADGGNNYPFCFNRKEAKDHGEGGNLVGAPLAGRVLIVDDVISAGTSVRESVEYIHAAGATPAGVAIALDRMERGKGELSAVQEVRCMYGIPVTSIVNLENIVDYLREQGNLAHHLPAVEEYRARYSSRMVEPIECGGGTPRAG.

Lysine 26 provides a ligand contact to 5-phospho-alpha-D-ribose 1-diphosphate. 34 to 35 (FF) is an orotate binding site. Residues 72-73 (YK), arginine 98, lysine 99, lysine 102, histidine 104, and 123-131 (DDVISAGTS) each bind 5-phospho-alpha-D-ribose 1-diphosphate. 2 residues coordinate orotate: serine 127 and arginine 155.

Belongs to the purine/pyrimidine phosphoribosyltransferase family. PyrE subfamily. In terms of assembly, homodimer. Mg(2+) serves as cofactor.

It catalyses the reaction orotidine 5'-phosphate + diphosphate = orotate + 5-phospho-alpha-D-ribose 1-diphosphate. It participates in pyrimidine metabolism; UMP biosynthesis via de novo pathway; UMP from orotate: step 1/2. Catalyzes the transfer of a ribosyl phosphate group from 5-phosphoribose 1-diphosphate to orotate, leading to the formation of orotidine monophosphate (OMP). The protein is Orotate phosphoribosyltransferase of Nitrosospira multiformis (strain ATCC 25196 / NCIMB 11849 / C 71).